The sequence spans 182 residues: Large ribosomal subunit protein uL6 (182 aa).

It belongs to the universal ribosomal protein uL6 family. Part of the 50S ribosomal subunit.

In terms of biological role, this protein binds to the 23S rRNA, and is important in its secondary structure. It is located near the subunit interface in the base of the L7/L12 stalk, and near the tRNA binding site of the peptidyltransferase center. This is Large ribosomal subunit protein uL6 from Trichormus variabilis (strain ATCC 29413 / PCC 7937) (Anabaena variabilis).